The primary structure comprises 197 residues: Fe/S biogenesis protein NfuA (197 aa).

Residues cysteine 155 and cysteine 158 each contribute to the [4Fe-4S] cluster site.

The protein belongs to the NfuA family. Homodimer. It depends on [4Fe-4S] cluster as a cofactor.

Functionally, involved in iron-sulfur cluster biogenesis. Binds a 4Fe-4S cluster, can transfer this cluster to apoproteins, and thereby intervenes in the maturation of Fe/S proteins. Could also act as a scaffold/chaperone for damaged Fe/S proteins. This Pseudomonas syringae pv. syringae (strain B728a) protein is Fe/S biogenesis protein NfuA.